Consider the following 63-residue polypeptide: Jingdongin-1-MT1 (63 aa).

The N-terminal stretch at 1–22 (MFTLKKSLLLLFFLGTINLSLC) is a signal peptide. A propeptide spans 23-44 (EQERDADEEERRDDDEMDVEVE) (removed in mature form). C57 and C63 form a disulfide bridge.

Belongs to the frog skin active peptide (FSAP) family. Brevinin subfamily. In terms of tissue distribution, expressed by the skin glands.

It is found in the secreted. Functionally, antimicrobial peptide. Active against some Gram-negative and a variety of Gram-positive bacterial strains. Active against fungus C.glabrata 090902 but not against C.neoformans 201211. Shows hemolytic activity against human erythrocytes. This Amolops mantzorum (Sichuan torrent frog) protein is Jingdongin-1-MT1.